The following is a 153-amino-acid chain: uncharacterized protein (153 aa).

Disordered stretches follow at residues 30-66 (GPTVDTKRQELPILSEDSDGSDKEDEQPQVVVLRKGD) and 79-153 (IKEN…DYDD). Over residues 45–56 (EDSDGSDKEDEQ) the composition is skewed to acidic residues. Composition is skewed to polar residues over residues 106-116 (GDTTSGVNACS) and 130-144 (GTKSSQKQVKNSSLL).

This is an uncharacterized protein from Xenopus laevis (African clawed frog).